The following is a 283-amino-acid chain: DegV domain-containing protein lin2658 (283 aa).

One can recognise a DegV domain in the interval 5 to 282 (IAVVTDSTTY…EGALGLTWSI (278 aa)). Residues S63 and S96 each coordinate hexadecanoate.

Its function is as follows. May bind long-chain fatty acids, such as palmitate, and may play a role in lipid transport or fatty acid metabolism. The chain is DegV domain-containing protein lin2658 from Listeria innocua serovar 6a (strain ATCC BAA-680 / CLIP 11262).